We begin with the raw amino-acid sequence, 432 residues long: Serine/threonine-protein kinase stk11 (432 aa).

The region spanning Y52–F312 is the Protein kinase domain. ATP-binding positions include L58–V66 and K81. Catalysis depends on D179, which acts as the Proton acceptor. T192 is subject to Phosphothreonine; by autocatalysis. The interval T398–Q432 is disordered. Polar residues predominate over residues S409–S421. Basic residues predominate over residues K422 to Q432. S427 bears the Phosphoserine; by PKA mark.

Belongs to the protein kinase superfamily. CAMK Ser/Thr protein kinase family. LKB1 subfamily. As to quaternary structure, catalytic component of a trimeric complex composed of STK11/LKB1, STRAD (STRADA or STRADB) and CAB39/MO25 (CAB39/MO25alpha or CAB39L/MO25beta). Requires Mg(2+) as cofactor. The cofactor is Mn(2+). In terms of processing, phosphorylated by a cAMP-dependent protein kinase. Autophosphorylated in a reaction that prefers Mn(2+) to Mg(2+). As to expression, oocytes, eggs and early embryos.

The protein localises to the nucleus. It localises to the cytoplasm. The catalysed reaction is L-seryl-[protein] + ATP = O-phospho-L-seryl-[protein] + ADP + H(+). It catalyses the reaction L-threonyl-[protein] + ATP = O-phospho-L-threonyl-[protein] + ADP + H(+). Functionally, tumor suppressor serine/threonine-protein kinase that controls the activity of AMP-activated protein kinase (AMPK) family members, thereby playing a role in various processes such as cell metabolism, cell polarity, apoptosis and DNA damage response. Acts by phosphorylating the T-loop of AMPK family proteins, leading to promote their activity. This chain is Serine/threonine-protein kinase stk11, found in Xenopus laevis (African clawed frog).